A 637-amino-acid chain; its full sequence is Biosynthetic arginine decarboxylase (637 aa).

N6-(pyridoxal phosphate)lysine is present on K101. 286–296 (FDVGGGLAVDY) is a substrate binding site.

The protein belongs to the Orn/Lys/Arg decarboxylase class-II family. SpeA subfamily. Mg(2+) serves as cofactor. It depends on pyridoxal 5'-phosphate as a cofactor.

The catalysed reaction is L-arginine + H(+) = agmatine + CO2. Its pathway is amine and polyamine biosynthesis; agmatine biosynthesis; agmatine from L-arginine: step 1/1. Functionally, catalyzes the biosynthesis of agmatine from arginine. In Shewanella piezotolerans (strain WP3 / JCM 13877), this protein is Biosynthetic arginine decarboxylase.